A 1169-amino-acid chain; its full sequence is Pesticidal crystal protein Cry8Ba (1169 aa).

Residues 1–26 are disordered; sequence MSPNNQNEYEIIDATPSTSVSNDSNR. A compositionally biased stretch (polar residues) spans 15–25; that stretch reads TPSTSVSNDSN.

The protein belongs to the delta endotoxin family.

Its function is as follows. Promotes colloidosmotic lysis by binding to the midgut epithelial cells of insects. Active on various scarabaeid beetles. The chain is Pesticidal crystal protein Cry8Ba (cry8Ba) from Bacillus thuringiensis serovar kumamotoensis.